The sequence spans 136 residues: Large ribosomal subunit protein uL16c (136 aa).

The protein belongs to the universal ribosomal protein uL16 family. Part of the 50S ribosomal subunit.

The protein localises to the plastid. It localises to the chloroplast. This Buxus microphylla (Littleleaf boxwood) protein is Large ribosomal subunit protein uL16c.